We begin with the raw amino-acid sequence, 367 residues long: Cell division protein FtsZ (367 aa).

GTP is bound by residues 17-21 (GGGSN), 104-106 (GTG), Glu-135, Lys-139, and Asp-183.

This sequence belongs to the FtsZ family. In terms of assembly, homodimer. Polymerizes to form a dynamic ring structure in a strictly GTP-dependent manner. Interacts directly with several other division proteins.

Its subcellular location is the cytoplasm. Essential cell division protein that forms a contractile ring structure (Z ring) at the future cell division site. The regulation of the ring assembly controls the timing and the location of cell division. One of the functions of the FtsZ ring is to recruit other cell division proteins to the septum to produce a new cell wall between the dividing cells. Binds GTP and shows GTPase activity. This Aquifex aeolicus (strain VF5) protein is Cell division protein FtsZ.